Consider the following 402-residue polypeptide: MMMMGEGAHAPPWQQHVASPVSGVEGGGGRESEVVAAPYHLLDTLRHYLPSNEAAAAEDEEEAAAVAAAVDAYACDEFRMYEFKVRRCARGRSHDWTECPFAHPGEKARRRDPRRYCYSGTACPDFRKGGCKRGDACEFAHGVFECWLHPARYRTQPCKDGTACRRRVCFFAHTPDQLRVLPPSQQQGSNSPRGCGGGGAGAAASPLAESYDGSPLRRQAFESYLTKSIMSSSPTSTLVSPPRSPPSESPPLSPDAAGALRRGAWAGVGSPVNDVHVSLRQLRLGSPRSAPSCASFLPAGYQYGSPKSPAAAAAAALYSLPSTPTRLSPVTVTTASGATVTVEPLDLGLIEEEQPMERVESGRALREKVFERLSKEATVSTDAAAAAAGVAPDVGWVSDLIN.

2 C3H1-type zinc fingers span residues 117–144 (CYSG…HGVF) and 152–176 (RYRT…HTPD). Disordered regions lie at residues 180 to 211 (VLPP…AESY) and 232 to 258 (SSPT…DAAG). The segment covering 183-192 (PSQQQGSNSP) has biased composition (polar residues). Residues 232–241 (SSPTSTLVSP) are compositionally biased toward low complexity. Positions 242-253 (PRSPPSESPPLS) are enriched in pro residues.

The polypeptide is Zinc finger CCCH domain-containing protein 35 (Oryza sativa subsp. japonica (Rice)).